A 49-amino-acid chain; its full sequence is Large ribosomal subunit protein bL33 (49 aa).

This sequence belongs to the bacterial ribosomal protein bL33 family.

In Nitratidesulfovibrio vulgaris (strain ATCC 29579 / DSM 644 / CCUG 34227 / NCIMB 8303 / VKM B-1760 / Hildenborough) (Desulfovibrio vulgaris), this protein is Large ribosomal subunit protein bL33.